The sequence spans 151 residues: Cytochrome c-type biogenesis protein CcmE (151 aa).

The Cytoplasmic segment spans residues 1 to 8; that stretch reads MNPLRKKR. A helical; Signal-anchor for type II membrane protein transmembrane segment spans residues 9–29; sequence LLIILAILVGVGIAVGLALSA. The Periplasmic segment spans residues 30-151; the sequence is LKENINLFYT…QSAPTPAKEG (122 aa). 2 residues coordinate heme: histidine 124 and tyrosine 128. The tract at residues 131–151 is disordered; the sequence is PEVTKALKDSGQSAPTPAKEG.

Belongs to the CcmE/CycJ family.

Its subcellular location is the cell inner membrane. Its function is as follows. Heme chaperone required for the biogenesis of c-type cytochromes. Transiently binds heme delivered by CcmC and transfers the heme to apo-cytochromes in a process facilitated by CcmF and CcmH. This is Cytochrome c-type biogenesis protein CcmE from Pseudomonas fluorescens (strain ATCC BAA-477 / NRRL B-23932 / Pf-5).